We begin with the raw amino-acid sequence, 65 residues long: Large ribosomal subunit protein bL35 (65 aa).

Residues 1–16 (MPKQKTHRASAKRFKR) are compositionally biased toward basic residues. The segment at 1-20 (MPKQKTHRASAKRFKRTGSG) is disordered.

This sequence belongs to the bacterial ribosomal protein bL35 family.

This is Large ribosomal subunit protein bL35 from Streptococcus equi subsp. equi (strain 4047).